A 106-amino-acid polypeptide reads, in one-letter code: Programmed cell death activator egl-1 (106 aa).

A BH3-like region spans residues 73-81 (LAAMCDDFD).

Interacts with ced-9; the interaction results in ced-4 release from the ced-4/ced-9 complex. Interaction with ced-9 may enhance interaction of ced-9 with drp-1, but not with ced-4. A ced-9/egl-1 complex may recruit drp-1 to the mitochondrial surface.

It is found in the synapse. Functionally, plays a major role in programmed cell death (PCD or apoptosis) by negatively regulating ced-9. Binds to and directly inhibits the activity of ced-9, releasing the cell death activator ced-4 from a ced-9/ced-4 containing protein complex and allowing ced-4 to activate the cell-killing caspase ced-3. Required to activate programmed cell death in the sister cells of the serotonergic neurosecretory motor (NSM) neurons during embryogenesis. Required to activate programmed cell death in the sister cells of the M4 motor neuron and I1 pharyngeal neuron during embryogenesis. During larval development, required for the elimination of transient presynaptic components upstream of ced-9, ced-4 and ced-3 apoptotic pathway. Together with ain-1, a component of the miRNA-induced-silencing complex (miRISC), and probably upstream of ced-3 and ced-4, regulates temporal cell fate patterning during larval development. Has been shown in two studies to be dispensable in mitochondrial dynamics and morphology during early embryonic development. However, one study shows that during larval development, egl-1 is involved in modulating mitochondrial dynamics, perhaps acting by stabilizing the interaction between ced-9 and drp-1 in order to promote mitochondrial fission. Involved in inducing mitochondrial fragmentation during apoptosis, probably acting via ced-9 and dynamin-related protein drp-1. The protein is Programmed cell death activator egl-1 of Caenorhabditis elegans.